A 424-amino-acid polypeptide reads, in one-letter code: Probable serine/threonine-protein kinase PBL12 (424 aa).

The Protein kinase domain occupies 88–368; sequence FSRSNMLGEG…CEVVKVLESI (281 aa). ATP-binding positions include 94 to 102 and lysine 123; that span reads LGEGGFGPV. Aspartate 218 acts as the Proton acceptor in catalysis.

It belongs to the protein kinase superfamily. Ser/Thr protein kinase family. Expressed specifically in roots.

Its subcellular location is the cell membrane. The catalysed reaction is L-seryl-[protein] + ATP = O-phospho-L-seryl-[protein] + ADP + H(+). The enzyme catalyses L-threonyl-[protein] + ATP = O-phospho-L-threonyl-[protein] + ADP + H(+). May play a role in the signal transduction pathway of osmotic stress. May be involved in plant defense signaling. The polypeptide is Probable serine/threonine-protein kinase PBL12 (Arabidopsis thaliana (Mouse-ear cress)).